The primary structure comprises 85 residues: Putative membrane protein insertion efficiency factor (85 aa).

The protein belongs to the UPF0161 family.

Its subcellular location is the cell inner membrane. Could be involved in insertion of integral membrane proteins into the membrane. The chain is Putative membrane protein insertion efficiency factor from Serratia proteamaculans (strain 568).